The following is a 407-amino-acid chain: Cell division protein FtsZ (407 aa).

GTP-binding positions include 18–22, 105–107, E136, R140, and D184; these read GGGVN and GTG. The tract at residues 312–407 is disordered; sequence FDGGQPPARR…EELDVPDFLK (96 aa). Composition is skewed to low complexity over residues 336-348 and 368-377; these read AAPARSSAESTRP and APATASGESS. The segment covering 381 to 390 has biased composition (pro residues); it reads VSPPHVPPAR. A compositionally biased stretch (acidic residues) spans 396-407; sequence QAEELDVPDFLK.

The protein belongs to the FtsZ family. As to quaternary structure, homodimer. Polymerizes to form a dynamic ring structure in a strictly GTP-dependent manner. Interacts directly with several other division proteins.

Its subcellular location is the cytoplasm. Functionally, essential cell division protein that forms a contractile ring structure (Z ring) at the future cell division site. The regulation of the ring assembly controls the timing and the location of cell division. One of the functions of the FtsZ ring is to recruit other cell division proteins to the septum to produce a new cell wall between the dividing cells. Binds GTP and shows GTPase activity. In Streptomyces griseus, this protein is Cell division protein FtsZ.